The sequence spans 508 residues: Photosystem II CP47 reaction center protein (508 aa).

The next 6 helical transmembrane spans lie at 21 to 36 (AVHLMHTALVSGWAGS), 101 to 115 (IVLSGLLFLAAIWHW), 140 to 156 (GIHLFLSGVLCFAFGAF), 203 to 218 (IAAGILGILAGLFHLS), 237 to 252 (VLSSSIAAVFFAAFVV), and 457 to 472 (TFALLFFFGHIWHGAR).

Belongs to the PsbB/PsbC family. PsbB subfamily. PSII is composed of 1 copy each of membrane proteins PsbA, PsbB, PsbC, PsbD, PsbE, PsbF, PsbH, PsbI, PsbJ, PsbK, PsbL, PsbM, PsbT, PsbX, PsbY, PsbZ, Psb30/Ycf12, at least 3 peripheral proteins of the oxygen-evolving complex and a large number of cofactors. It forms dimeric complexes. Binds multiple chlorophylls. PSII binds additional chlorophylls, carotenoids and specific lipids. is required as a cofactor.

The protein localises to the plastid. Its subcellular location is the chloroplast thylakoid membrane. One of the components of the core complex of photosystem II (PSII). It binds chlorophyll and helps catalyze the primary light-induced photochemical processes of PSII. PSII is a light-driven water:plastoquinone oxidoreductase, using light energy to abstract electrons from H(2)O, generating O(2) and a proton gradient subsequently used for ATP formation. This Marchantia polymorpha (Common liverwort) protein is Photosystem II CP47 reaction center protein.